A 318-amino-acid chain; its full sequence is Adenylate isopentenyltransferase 4 (318 aa).

12 to 19 (GATGSGKS) is a binding site for ATP.

This sequence belongs to the IPP transferase family. Mg(2+) serves as cofactor. Expressed in immature seeds with highest expression in the chalazal endosperm.

It is found in the cytoplasm. It carries out the reaction dimethylallyl diphosphate + ADP = N(6)-(dimethylallyl)adenosine 5'-diphosphate + diphosphate. The catalysed reaction is dimethylallyl diphosphate + ATP = N(6)-(dimethylallyl)adenosine 5'-triphosphate + diphosphate. In terms of biological role, involved in cytokinin biosynthesis. Catalyzes the transfer of an isopentenyl group from dimethylallyl diphosphate (DMAPP) to ATP and ADP, but not to AMP. Has no DMAPP:tRNA isopentenyltransferase activity. This is Adenylate isopentenyltransferase 4 (IPT4) from Arabidopsis thaliana (Mouse-ear cress).